The sequence spans 297 residues: Protease HtpX homolog (297 aa).

The next 2 helical transmembrane spans lie at 14–34 (VILL…AGYL) and 39–59 (YQLG…SMIF). His-143 provides a ligand contact to Zn(2+). The active site involves Glu-144. Position 147 (His-147) interacts with Zn(2+). The next 2 membrane-spanning stretches (helical) occupy residues 158–178 (IAVA…RMMW) and 193–213 (GFGA…PLAA). Glu-225 is a binding site for Zn(2+).

This sequence belongs to the peptidase M48B family. Requires Zn(2+) as cofactor.

It is found in the cell membrane. The protein is Protease HtpX homolog of Streptococcus equi subsp. zooepidemicus (strain MGCS10565).